A 146-amino-acid chain; its full sequence is Anti-sigma F factor (146 aa).

It belongs to the anti-sigma-factor family.

The catalysed reaction is L-seryl-[protein] + ATP = O-phospho-L-seryl-[protein] + ADP + H(+). The enzyme catalyses L-threonyl-[protein] + ATP = O-phospho-L-threonyl-[protein] + ADP + H(+). Binds to sigma F and blocks its ability to form an RNA polymerase holoenzyme (E-sigma F). Phosphorylates SpoIIAA on a serine residue. This phosphorylation may enable SpoIIAA to act as an anti-anti-sigma factor that counteracts SpoIIAB and thus releases sigma F from inhibition. This Geobacillus stearothermophilus (Bacillus stearothermophilus) protein is Anti-sigma F factor.